We begin with the raw amino-acid sequence, 443 residues long: MLRAPRTLAPATAQPTKSLPALNPTELWPSGLSSPQLCPATTATTYYTSLYTQTVPSSVALGTCLDATPHGPEGQIVRCAPAGRLPAKRKLDLEGIGRPTVPEFRTPKGKCIRVDGLPSPKTPKSPGEKTRYDTSLGLLTKKFIYLLSESEDGVLDLNWAAEVLDVQKRRIYDITNVLEGIQLIRKKSKNNIQWVGRELFEDPTRPSRQQQLGQELKELMNAEQTLDQLIQSCSLSFKHLTEDNANKKLAYVTYQDIRAVGNFKEQTVIAVKAPPQTRLEVPDRAEENLQIYLKSTQGPIEVYLCPEEGQEPDSPAKEALPSTSALSPIPDCAQPGCSTDSGIAETIEPSVLIPQPIPPPPPPPLPPAPSLVPLEATDNMLELSHPLLQQTEDQFLSPILAANSPLISFSPPLDQDEYLWGMDEGEGISDLFDSYDLGDLLIN.

The interval 1 to 22 is disordered; sequence MLRAPRTLAPATAQPTKSLPAL. The segment at 67–107 is cyclin A/CDK2 binding; that stretch reads ATPHGPEGQIVRCAPAGRLPAKRKLDLEGIGRPTVPEFRTP. Residues 109 to 198 mediate DNA binding; it reads GKCIRVDGLP…KNNIQWVGRE (90 aa). The interval 157–178 is leucine-zipper; sequence LNWAAEVLDVQKRRIYDITNVL. Residues 162 to 198 carry the DEF box motif; sequence EVLDVQKRRIYDITNVLEGIQLIRKKSKNNIQWVGRE. The dimerization stretch occupies residues 199-291; the sequence is LFEDPTRPSR…PDRAEENLQI (93 aa). The segment at 306–341 is disordered; the sequence is PEEGQEPDSPAKEALPSTSALSPIPDCAQPGCSTDS. Residues 361 to 443 form a transactivation region; that stretch reads PPPPLPPAPS…SYDLGDLLIN (83 aa). The tract at residues 416-433 is retinoblastoma protein binding; that stretch reads DEYLWGMDEGEGISDLFD.

The protein belongs to the E2F/DP family. As to quaternary structure, component of the DRTF1/E2F transcription factor complex. Forms heterodimers with DP family members. The E2F2 complex binds specifically hypophosphorylated retinoblastoma protein RB1. During the cell cycle, RB1 becomes phosphorylated in mid-to-late G1 phase, detaches from the DRTF1/E2F complex, rendering E2F transcriptionally active. Viral oncoproteins, notably E1A, T-antigen and HPV E7, are capable of sequestering RB protein, thus releasing the active complex. Binds EAPP. Phosphorylated by CDK2 and cyclin A-CDK2 in the S-phase.

It is found in the nucleus. Its function is as follows. Transcription activator that binds DNA cooperatively with DP proteins through the E2 recognition site, 5'-TTTC[CG]CGC-3' found in the promoter region of a number of genes whose products are involved in cell cycle regulation or in DNA replication. The DRTF1/E2F complex functions in the control of cell-cycle progression from g1 to s phase. E2F2 binds specifically to RB1 in a cell-cycle dependent manner. The chain is Transcription factor E2F2 (E2f2) from Mus musculus (Mouse).